Here is a 299-residue protein sequence, read N- to C-terminus: CCR4-NOT transcription complex subunit 9 (299 aa).

Met1 is modified (N-acetylmethionine).

The protein belongs to the CNOT9 family. Homodimer. Component of the CCR4-NOT complex; distinct complexes seem to exist that differ in the participation of probably mutually exclusive catalytic subunits. Interacts with MYB, ATF2, RARA, RARB, RARG, RXRA, RXRB and RXRG. Identified in a complex with ATF2 bound to target DNA. Interacts with NANOS2. Directly interacts with ZNF335. In terms of tissue distribution, detected in spleen, thymus, prostate, testis, ovary and intestine.

Its subcellular location is the nucleus. It localises to the cytoplasm. The protein resides in the P-body. Component of the CCR4-NOT complex which is one of the major cellular mRNA deadenylases and is linked to various cellular processes including bulk mRNA degradation, miRNA-mediated repression, translational repression during translational initiation and general transcription regulation. Additional complex functions may be a consequence of its influence on mRNA expression. Involved in down-regulation of MYB- and JUN-dependent transcription. May play a role in cell differentiation. Can bind oligonucleotides, such as poly-G, poly-C or poly-T (in vitro), but the physiological relevance of this is not certain. Does not bind poly-A. Enhances ligand-dependent transcriptional activity of nuclear hormone receptors, including RARA, expect ESR1-mediated transcription that is not only slightly increased, if at all. In Homo sapiens (Human), this protein is CCR4-NOT transcription complex subunit 9.